The sequence spans 1054 residues: Calcium-transporting ATPase 2, endoplasmic reticulum-type (1054 aa).

Over 1 to 53 (MEEEKSFSAWSWSVEQCLKEYKTRLDKGLTSEDVQIRRQKYGFNELAKEKGKP) the chain is Cytoplasmic. Residues 54 to 74 (LWHLVLEQFDDTLVKILLGAA) form a helical membrane-spanning segment. The Lumenal portion of the chain corresponds to 75–98 (FISFVLAFLGEEHGSGSGFEAFVE). A helical membrane pass occupies residues 99–118 (PFVIVLILILNAVVGVWQES). The Cytoplasmic portion of the chain corresponds to 119-262 (NAEKALEALK…ESETPLKKKL (144 aa)). Residues 263-282 (DEFGSRLTTAICIVCVLVWM) form a helical membrane-spanning segment. Residues 283 to 312 (INYKNFVSWDVVDGYKPVNIKFSFEKCTYY) are Lumenal-facing. Residues 313 to 330 (FKIAVALAVAAIPEGLPA) form a helical membrane-spanning segment. Positions 321, 322, 324, and 326 each coordinate Ca(2+). Residues 331–782 (VITTCLALGT…AEGRSIYNNM (452 aa)) lie on the Cytoplasmic side of the membrane. The 4-aspartylphosphate intermediate role is filled by Asp-368. The Mg(2+) site is built by Asp-727 and Asp-731. Residues 783–802 (KAFIRYMISSNVGEVISIFL) traverse the membrane as a helical segment. Asn-793 and Glu-796 together coordinate Ca(2+). Topologically, residues 803–812 (TAALGIPECM) are lumenal. A helical transmembrane segment spans residues 813 to 833 (IPVQLLWVNLVTDGPPATALG). Residues Asn-821, Thr-824, and Asp-825 each coordinate Ca(2+). At 834-853 (FNPADIDIMKKPPRKSDDCL) the chain is on the cytoplasmic side. The chain crosses the membrane as a helical span at residues 854-876 (IDSWVLIRYLVIGSYVGVATVGI). Residues 877–949 (FVLWYTQASF…YFTLGKVKPM (73 aa)) are Lumenal-facing. A helical transmembrane segment spans residues 950 to 969 (TLSLTVLVAIEMFNSLNALS). Glu-960 is a binding site for Ca(2+). The Cytoplasmic portion of the chain corresponds to 970 to 982 (EDNSLLTMPPWRN). A helical transmembrane segment spans residues 983 to 1001 (PWLLVAMTVSFALHCVILY). The Lumenal segment spans residues 1002–1016 (VPFLANVFGIVPLSF). Residues 1017-1037 (REWFVVILVSFPVILIDEALK) form a helical membrane-spanning segment. At 1038-1054 (FIGRCRRTRIKKKIKTM) the chain is on the cytoplasmic side.

It belongs to the cation transport ATPase (P-type) (TC 3.A.3) family. Type IIA subfamily.

It localises to the membrane. It carries out the reaction Ca(2+)(in) + ATP + H2O = Ca(2+)(out) + ADP + phosphate + H(+). Functionally, this magnesium-dependent enzyme catalyzes the hydrolysis of ATP coupled with the translocation of calcium from the cytosol to an endomembrane compartment. The sequence is that of Calcium-transporting ATPase 2, endoplasmic reticulum-type (ECA2) from Arabidopsis thaliana (Mouse-ear cress).